The following is a 338-amino-acid chain: MQVYYDKDADLSIIQGMKVAIVGYGSQGHAHANNLKDSGVDVTVALRAGSASAKKAEGAGLKVQGIEEAVKAADLIMILAPDEHQAALYKNQVEPNLKQGAVLAFAHGFNVHFEQIVPRSDVDVIMIAPKGPGHLVRSTYTKGGGVPSLIAVYQDASGRARDIALSYASANGGGRAGVIETSFKDETETDLFGEQAVLCGGATALVQAGFETLVEAGYPPEMAYFECLHELKLIVDLMYEGGIADMRYSISNTAEYGDITRGPRVVTEQTKAEMKKILTEIQTGKFAREFILENQAGAATLKASRRIAREHPIEVVGAKLRDMMPWIKANKIVDKSKN.

Positions 1 to 181 (MQVYYDKDAD…GGGRAGVIET (181 aa)) constitute a KARI N-terminal Rossmann domain. NADP(+)-binding positions include 24-27 (YGSQ), R47, S50, S52, and 82-85 (DEHQ). Residue H107 is part of the active site. G133 contributes to the NADP(+) binding site. In terms of domain architecture, KARI C-terminal knotted spans 182-327 (SFKDETETDL…AKLRDMMPWI (146 aa)). Mg(2+)-binding residues include D190, E194, E226, and E230. Residue S251 participates in substrate binding.

The protein belongs to the ketol-acid reductoisomerase family. Mg(2+) serves as cofactor.

It carries out the reaction (2R)-2,3-dihydroxy-3-methylbutanoate + NADP(+) = (2S)-2-acetolactate + NADPH + H(+). The enzyme catalyses (2R,3R)-2,3-dihydroxy-3-methylpentanoate + NADP(+) = (S)-2-ethyl-2-hydroxy-3-oxobutanoate + NADPH + H(+). It participates in amino-acid biosynthesis; L-isoleucine biosynthesis; L-isoleucine from 2-oxobutanoate: step 2/4. Its pathway is amino-acid biosynthesis; L-valine biosynthesis; L-valine from pyruvate: step 2/4. Functionally, involved in the biosynthesis of branched-chain amino acids (BCAA). Catalyzes an alkyl-migration followed by a ketol-acid reduction of (S)-2-acetolactate (S2AL) to yield (R)-2,3-dihydroxy-isovalerate. In the isomerase reaction, S2AL is rearranged via a Mg-dependent methyl migration to produce 3-hydroxy-3-methyl-2-ketobutyrate (HMKB). In the reductase reaction, this 2-ketoacid undergoes a metal-dependent reduction by NADPH to yield (R)-2,3-dihydroxy-isovalerate. This Thioalkalivibrio sulfidiphilus (strain HL-EbGR7) protein is Ketol-acid reductoisomerase (NADP(+)).